Reading from the N-terminus, the 144-residue chain is Phospholipase A2 (144 aa).

Positions 1 to 15 are cleaved as a signal peptide; that stretch reads MKFLVLAALLTAGTA. Residues 16–22 constitute a propeptide, activation peptide; that stretch reads ASGVSPT. Cystine bridges form between Cys33–Cys99, Cys49–Cys144, Cys51–Cys67, Cys66–Cys127, Cys73–Cys120, Cys83–Cys113, and Cys106–Cys118. Residues Tyr50, Gly52, and Gly54 each contribute to the Ca(2+) site. His70 is an active-site residue. Residue Asp71 participates in Ca(2+) binding. The active site involves Asp121.

It belongs to the phospholipase A2 family. As to quaternary structure, monomer or homodimer. The cofactor is Ca(2+). Activated by trypsin cleavage in the duodenum. Can also be activated by thrombin or autocatalytically.

It is found in the secreted. The enzyme catalyses a 1,2-diacyl-sn-glycero-3-phosphocholine + H2O = a 1-acyl-sn-glycero-3-phosphocholine + a fatty acid + H(+). It carries out the reaction 1,2-ditetradecanoyl-sn-glycero-3-phosphocholine + H2O = 1-tetradecanoyl-sn-glycero-3-phosphocholine + tetradecanoate + H(+). It catalyses the reaction 1,2-dihexadecanoyl-sn-glycero-3-phosphocholine + H2O = 1-hexadecanoyl-sn-glycero-3-phosphocholine + hexadecanoate + H(+). The catalysed reaction is 1-hexadecanoyl-2-(9Z-octadecenoyl)-sn-glycero-3-phosphocholine + H2O = 1-hexadecanoyl-sn-glycero-3-phosphocholine + (9Z)-octadecenoate + H(+). The enzyme catalyses 1-hexadecanoyl-2-(5Z,8Z,11Z,14Z-eicosatetraenoyl)-sn-glycero-3-phosphocholine + H2O = 1-hexadecanoyl-sn-glycero-3-phosphocholine + (5Z,8Z,11Z,14Z)-eicosatetraenoate + H(+). It carries out the reaction 1-hexadecanoyl-2-(9Z-octadecenoyl)-sn-glycero-3-phospho-(1'-sn-glycerol) + H2O = 1-hexadecanoyl-sn-glycero-3-phospho-(1'-sn-glycerol) + (9Z)-octadecenoate + H(+). It catalyses the reaction N-hexadecanoyl-1,2-di-(9Z-octadecenoyl)-sn-glycero-3-phosphoethanolamine + H2O = N-hexadecanoyl-1-(9Z-octadecenoyl)-sn-glycero-3-phosphoethanolamine + (9Z)-octadecenoate + H(+). The catalysed reaction is 1-hexadecanoyl-2-(9Z,12Z-octadecadienoyl)-sn-glycero-3-phosphoethanolamine + H2O = 1-hexadecanoyl-sn-glycero-3-phosphoethanolamine + (9Z,12Z)-octadecadienoate + H(+). The enzyme catalyses N,1-dihexadecanoyl-2-(9Z,12Z-octadecadienoyl)-sn-glycero-3-phosphoethanolamine + H2O = N,1-dihexadecanoyl-sn-glycero-3-phosphoethanolamine + (9Z,12Z)-octadecadienoate + H(+). Functionally, secretory calcium-dependent phospholipase A2 that primarily targets dietary phospholipids in the intestinal tract. Hydrolyzes the ester bond of the fatty acyl group attached at sn-2 position of phospholipids (phospholipase A2 activity) with preference for phosphatidylethanolamines and phosphatidylglycerols over phosphatidylcholines. May play a role in the biosynthesis of N-acyl ethanolamines that regulate energy metabolism and inflammation in the intestinal tract. Hydrolyzes N-acyl phosphatidylethanolamines to N-acyl lysophosphatidylethanolamines, which are further cleaved by a lysophospholipase D to release N-acyl ethanolamines. May act in an autocrine and paracrine manner. Has anti-helminth activity in a process regulated by gut microbiota. Upon helminth infection of intestinal epithelia, directly affects phosphatidylethanolamine contents in the membrane of helminth larvae, likely controlling an array of phospholipid-mediated cellular processes such as membrane fusion and cell division while providing for better immune recognition, ultimately reducing larvae integrity and infectivity. This Oryctolagus cuniculus (Rabbit) protein is Phospholipase A2 (PLA2G1B).